Here is a 251-residue protein sequence, read N- to C-terminus: Protein PBMUCL2 (251 aa).

An N-terminal signal peptide occupies residues 1-22 (MPRYVPLLLLLLLLRCSERGGG). Disordered regions lie at residues 36 to 55 (WRDG…DRAS) and 65 to 251 (LSQS…THLL). Basic and acidic residues predominate over residues 72 to 87 (KHPETSPKDSRIREND). N-linked (GlcNAc...) asparagine glycosylation is present at asparagine 120. Positions 150–164 (TKDSVTADPGTTENF) are enriched in polar residues. Positions 153 to 251 (SVTADPGTTE…TTKHGDTHLL (99 aa)) are 15 X 11 AA approximate repeats. The segment covering 241–251 (ETTKHGDTHLL) has biased composition (basic and acidic residues).

Detected in the brain, lung, spleen, thymus and prostate.

The protein localises to the secreted. This is Protein PBMUCL2 (HCG22) from Homo sapiens (Human).